The sequence spans 322 residues: ATP-dependent 6-phosphofructokinase (322 aa).

ATP is bound at residue G11. An ADP-binding site is contributed by 21–25 (RAVTR). ATP-binding positions include 72–73 (RC) and 102–105 (GDGS). A Mg(2+)-binding site is contributed by D103. A substrate-binding site is contributed by 127–129 (TID). The Proton acceptor role is filled by D129. R156 lines the ADP pocket. Residues R164 and 171 to 173 (MGR) contribute to the substrate site. Residues 187 to 189 (GAE), R213, and 215 to 217 (KKH) contribute to the ADP site. Substrate contacts are provided by residues E224, R245, and 251-254 (HIQR).

It belongs to the phosphofructokinase type A (PFKA) family. ATP-dependent PFK group I subfamily. Prokaryotic clade 'B1' sub-subfamily. As to quaternary structure, homotetramer. It depends on Mg(2+) as a cofactor.

It is found in the cytoplasm. It carries out the reaction beta-D-fructose 6-phosphate + ATP = beta-D-fructose 1,6-bisphosphate + ADP + H(+). Its pathway is carbohydrate degradation; glycolysis; D-glyceraldehyde 3-phosphate and glycerone phosphate from D-glucose: step 3/4. With respect to regulation, allosterically activated by ADP and other diphosphonucleosides, and allosterically inhibited by phosphoenolpyruvate. Catalyzes the phosphorylation of D-fructose 6-phosphate to fructose 1,6-bisphosphate by ATP, the first committing step of glycolysis. In Staphylococcus epidermidis (strain ATCC 12228 / FDA PCI 1200), this protein is ATP-dependent 6-phosphofructokinase.